A 46-amino-acid polypeptide reads, in one-letter code: Large ribosomal subunit protein bL34 (46 aa).

The disordered stretch occupies residues 25–46 (TASGRQVLRRRRAKGRYRLAVS). Over residues 31–46 (VLRRRRAKGRYRLAVS) the composition is skewed to basic residues.

Belongs to the bacterial ribosomal protein bL34 family.

This Synechococcus sp. (strain JA-3-3Ab) (Cyanobacteria bacterium Yellowstone A-Prime) protein is Large ribosomal subunit protein bL34.